Consider the following 229-residue polypeptide: 7-cyano-7-deazaguanine synthase (229 aa).

Residue 9 to 19 (YSGGLDSTTCM) participates in ATP binding. The Zn(2+) site is built by C189, C199, C202, and C205.

The protein belongs to the QueC family. It depends on Zn(2+) as a cofactor.

It carries out the reaction 7-carboxy-7-deazaguanine + NH4(+) + ATP = 7-cyano-7-deazaguanine + ADP + phosphate + H2O + H(+). Its pathway is purine metabolism; 7-cyano-7-deazaguanine biosynthesis. Catalyzes the ATP-dependent conversion of 7-carboxy-7-deazaguanine (CDG) to 7-cyano-7-deazaguanine (preQ(0)). The protein is 7-cyano-7-deazaguanine synthase of Geotalea daltonii (strain DSM 22248 / JCM 15807 / FRC-32) (Geobacter daltonii).